A 41-amino-acid chain; its full sequence is Probable cinnamyl alcohol dehydrogenase 2 (41 aa).

The protein belongs to the zinc-containing alcohol dehydrogenase family. It depends on Zn(2+) as a cofactor.

The enzyme catalyses (E)-cinnamyl alcohol + NADP(+) = (E)-cinnamaldehyde + NADPH + H(+). It carries out the reaction (E)-coniferol + NADP(+) = (E)-coniferaldehyde + NADPH + H(+). The catalysed reaction is (E)-sinapyl alcohol + NADP(+) = (E)-sinapaldehyde + NADPH + H(+). It catalyses the reaction (E)-4-coumaroyl alcohol + NADP(+) = (E)-4-coumaraldehyde + NADPH + H(+). The enzyme catalyses (E)-caffeyl alcohol + NADP(+) = (E)-caffeyl aldehyde + NADPH + H(+). It functions in the pathway aromatic compound metabolism; phenylpropanoid biosynthesis. Its function is as follows. Involved in lignin biosynthesis. Catalyzes the final step specific for the production of lignin monomers, like coniferyl alcohol, sinapyl alcohol and 4-coumaryl alcohol. The polypeptide is Probable cinnamyl alcohol dehydrogenase 2 (Pseudotsuga menziesii (Douglas-fir)).